Consider the following 122-residue polypeptide: Large ribosomal subunit protein uL14c (122 aa).

The protein belongs to the universal ribosomal protein uL14 family. In terms of assembly, part of the 50S ribosomal subunit.

The protein resides in the plastid. It is found in the chloroplast. In terms of biological role, binds to 23S rRNA. In Gnetum parvifolium (Small-leaved jointfir), this protein is Large ribosomal subunit protein uL14c.